The chain runs to 223 residues: Deoxyribose-phosphate aldolase (223 aa).

The active-site Proton donor/acceptor is Asp91. Lys153 serves as the catalytic Schiff-base intermediate with acetaldehyde. Catalysis depends on Lys182, which acts as the Proton donor/acceptor.

Belongs to the DeoC/FbaB aldolase family. DeoC type 1 subfamily.

Its subcellular location is the cytoplasm. It catalyses the reaction 2-deoxy-D-ribose 5-phosphate = D-glyceraldehyde 3-phosphate + acetaldehyde. Its pathway is carbohydrate degradation; 2-deoxy-D-ribose 1-phosphate degradation; D-glyceraldehyde 3-phosphate and acetaldehyde from 2-deoxy-alpha-D-ribose 1-phosphate: step 2/2. In terms of biological role, catalyzes a reversible aldol reaction between acetaldehyde and D-glyceraldehyde 3-phosphate to generate 2-deoxy-D-ribose 5-phosphate. This Yersinia pseudotuberculosis serotype O:1b (strain IP 31758) protein is Deoxyribose-phosphate aldolase.